The chain runs to 355 residues: UDP-N-acetylglucosamine--N-acetylmuramyl-(pentapeptide) pyrophosphoryl-undecaprenol N-acetylglucosamine transferase (355 aa).

Residues 13–15 (TGG), Asn-125, Arg-162, Ser-190, Ile-244, and Gln-289 each bind UDP-N-acetyl-alpha-D-glucosamine.

Belongs to the glycosyltransferase 28 family. MurG subfamily.

It localises to the cell inner membrane. The catalysed reaction is di-trans,octa-cis-undecaprenyl diphospho-N-acetyl-alpha-D-muramoyl-L-alanyl-D-glutamyl-meso-2,6-diaminopimeloyl-D-alanyl-D-alanine + UDP-N-acetyl-alpha-D-glucosamine = di-trans,octa-cis-undecaprenyl diphospho-[N-acetyl-alpha-D-glucosaminyl-(1-&gt;4)]-N-acetyl-alpha-D-muramoyl-L-alanyl-D-glutamyl-meso-2,6-diaminopimeloyl-D-alanyl-D-alanine + UDP + H(+). The protein operates within cell wall biogenesis; peptidoglycan biosynthesis. Functionally, cell wall formation. Catalyzes the transfer of a GlcNAc subunit on undecaprenyl-pyrophosphoryl-MurNAc-pentapeptide (lipid intermediate I) to form undecaprenyl-pyrophosphoryl-MurNAc-(pentapeptide)GlcNAc (lipid intermediate II). This chain is UDP-N-acetylglucosamine--N-acetylmuramyl-(pentapeptide) pyrophosphoryl-undecaprenol N-acetylglucosamine transferase, found in Neisseria gonorrhoeae (strain ATCC 700825 / FA 1090).